An 87-amino-acid chain; its full sequence is Protein anon-73B1 (87 aa).

Residues 25–47 (LLIRYGLYVGALFQFVCISAAVL) traverse the membrane as a helical segment. Positions 51–87 (NPDGQSNPESGEVTEREGEPVRTRLHKIRKLEKKKRR) are disordered. A compositionally biased stretch (basic and acidic residues) spans 63–72 (VTEREGEPVR). Residues 73–87 (TRLHKIRKLEKKKRR) are compositionally biased toward basic residues.

It belongs to the UPF0239 family.

Its subcellular location is the membrane. The chain is Protein anon-73B1 (anon-73B1) from Drosophila melanogaster (Fruit fly).